The sequence spans 304 residues: Methionyl-tRNA formyltransferase (304 aa).

Residue serine 106–proline 109 coordinates (6S)-5,6,7,8-tetrahydrofolate.

The protein belongs to the Fmt family.

It catalyses the reaction L-methionyl-tRNA(fMet) + (6R)-10-formyltetrahydrofolate = N-formyl-L-methionyl-tRNA(fMet) + (6S)-5,6,7,8-tetrahydrofolate + H(+). In terms of biological role, attaches a formyl group to the free amino group of methionyl-tRNA(fMet). The formyl group appears to play a dual role in the initiator identity of N-formylmethionyl-tRNA by promoting its recognition by IF2 and preventing the misappropriation of this tRNA by the elongation apparatus. This Thermosipho africanus (strain TCF52B) protein is Methionyl-tRNA formyltransferase.